A 131-amino-acid chain; its full sequence is UPF0102 protein YraN (131 aa).

It belongs to the UPF0102 family.

This chain is UPF0102 protein YraN, found in Salmonella arizonae (strain ATCC BAA-731 / CDC346-86 / RSK2980).